A 376-amino-acid chain; its full sequence is uncharacterized protein (376 aa).

This sequence belongs to the choline/ethanolamine kinase family.

This is an uncharacterized protein from Caenorhabditis elegans.